The chain runs to 316 residues: Acetyl-coenzyme A carboxylase carboxyl transferase subunit alpha (316 aa).

In terms of domain architecture, CoA carboxyltransferase C-terminal spans 39–293 (RLQDKSESLT…REQLNSQLHM (255 aa)).

This sequence belongs to the AccA family. As to quaternary structure, acetyl-CoA carboxylase is a heterohexamer composed of biotin carboxyl carrier protein (AccB), biotin carboxylase (AccC) and two subunits each of ACCase subunit alpha (AccA) and ACCase subunit beta (AccD).

Its subcellular location is the cytoplasm. The catalysed reaction is N(6)-carboxybiotinyl-L-lysyl-[protein] + acetyl-CoA = N(6)-biotinyl-L-lysyl-[protein] + malonyl-CoA. It participates in lipid metabolism; malonyl-CoA biosynthesis; malonyl-CoA from acetyl-CoA: step 1/1. Component of the acetyl coenzyme A carboxylase (ACC) complex. First, biotin carboxylase catalyzes the carboxylation of biotin on its carrier protein (BCCP) and then the CO(2) group is transferred by the carboxyltransferase to acetyl-CoA to form malonyl-CoA. This Stutzerimonas stutzeri (strain A1501) (Pseudomonas stutzeri) protein is Acetyl-coenzyme A carboxylase carboxyl transferase subunit alpha.